The primary structure comprises 1085 residues: Kinesin-like protein cut7 (1085 aa).

The segment at 1–70 (MAPRVAPGGS…TDHALHDENE (70 aa)) is disordered. The span at 24–37 (PVSTPNSHFRSASN) shows a compositional bias: polar residues. The Kinesin motor domain maps to 72–421 (NINVVVRVRG…LEYAARAKSI (350 aa)). ATP is bound at residue 159 to 166 (GQTGTGKT). Coiled coils occupy residues 436–604 (LIKD…WNLK), 715–740 (ISSELIELQKDMKESYRQLVQELRSL), and 897–955 (LALA…DSIK). 2 consecutive repeats follow at residues 987 to 998 (DESLCNLETTIE) and 999 to 1010 (DTSLVKLETTGD). At Thr1011 the chain carries Phosphothreonine; by CDC2. The tract at residues 1049 to 1085 (YTSSNQTNEPDVYDKPSNSSRTSLLRSSRSAYSKMKR) is disordered. Over residues 1065 to 1078 (SNSSRTSLLRSSRS) the composition is skewed to low complexity.

Belongs to the TRAFAC class myosin-kinesin ATPase superfamily. Kinesin family. BimC subfamily.

It is found in the cytoplasm. It localises to the cytoskeleton. Its subcellular location is the microtubule organizing center. The protein resides in the spindle pole body. Functionally, could be a spindle pole body motor. On transition from G2 to M phase of the cell cycle, the spindle pole body duplicates; the daughter pole bodies seed microtubules which interdigitate to form a short spindle that elongates to span the nucleus at metaphase. Mutations at cut7 block spindle formation. In Schizosaccharomyces pombe (strain 972 / ATCC 24843) (Fission yeast), this protein is Kinesin-like protein cut7 (cut7).